A 140-amino-acid polypeptide reads, in one-letter code: MATQKTFVMIKPDGVRRKLIGEIVGRIERKGLRIAAMKMVKIDRETANKLYEEHIGKSFFNELVSYITSGPVVCMVVEGDEAVRVMRTLIGATDPKEASPGTIRGDLALSKAENVIHASDAEEKAKREMSLFFSPNEITE.

The ATP site is built by lysine 11, phenylalanine 59, arginine 87, threonine 93, arginine 104, and asparagine 114. Histidine 117 functions as the Pros-phosphohistidine intermediate in the catalytic mechanism.

The protein belongs to the NDK family. Mg(2+) serves as cofactor.

Its subcellular location is the cytoplasm. The enzyme catalyses a 2'-deoxyribonucleoside 5'-diphosphate + ATP = a 2'-deoxyribonucleoside 5'-triphosphate + ADP. The catalysed reaction is a ribonucleoside 5'-diphosphate + ATP = a ribonucleoside 5'-triphosphate + ADP. Functionally, major role in the synthesis of nucleoside triphosphates other than ATP. The ATP gamma phosphate is transferred to the NDP beta phosphate via a ping-pong mechanism, using a phosphorylated active-site intermediate. The sequence is that of Nucleoside diphosphate kinase from Metallosphaera sedula (strain ATCC 51363 / DSM 5348 / JCM 9185 / NBRC 15509 / TH2).